The chain runs to 329 residues: Malate dehydrogenase (329 aa).

Residue 12-18 (GAAGQIG) coordinates NAD(+). R93 and R99 together coordinate substrate. Residues N106, Q113, and 130–132 (TGN) contribute to the NAD(+) site. Substrate is bound by residues N132 and R163. The Proton acceptor role is filled by H188.

The protein belongs to the LDH/MDH superfamily. MDH type 2 family.

It carries out the reaction (S)-malate + NAD(+) = oxaloacetate + NADH + H(+). Catalyzes the reversible oxidation of malate to oxaloacetate. This is Malate dehydrogenase from Mycobacterium bovis (strain ATCC BAA-935 / AF2122/97).